An 82-amino-acid polypeptide reads, in one-letter code: EMBRYO SURROUNDING FACTOR 1-like protein 10 (82 aa).

A signal peptide spans Met1 to Phe22. Cystine bridges form between Cys39-Cys55, Cys44-Cys74, Cys53-Cys70, and Cys56-Cys63.

It belongs to the MEG family. Expressed in stems, leaves and flowers.

The chain is EMBRYO SURROUNDING FACTOR 1-like protein 10 (ESFL10) from Arabidopsis thaliana (Mouse-ear cress).